Consider the following 2162-residue polypeptide: Calpain-type cysteine protease ADL1 (2162 aa).

An N-terminal signal peptide occupies residues 1 to 33; it reads MEEEEHRGVVLVCSICGFLFAVLGPLSFWILWA. The Extracellular portion of the chain corresponds to 34 to 70; sequence VNWRPWRLYSWIYARKWPAYVQGPQLSTLCSFFTLFA. The chain crosses the membrane as a helical span at residues 71-91; it reads WLVVVSPITVLLVWGGILIAL. At 92–95 the chain is on the cytoplasmic side; that stretch reads LERN. Residues 96–116 traverse the membrane as a helical segment; sequence IIGLAVIMVGVALLLSFYSIM. Residues 117-127 are Extracellular-facing; the sequence is LWWRTQWQSSK. Residues 128–148 traverse the membrane as a helical segment; the sequence is AVAYLLLLAVGLLCAYEFCAV. The Cytoplasmic portion of the chain corresponds to 149–164; sequence YVTTGASASELNSPSG. The helical transmembrane segment at 165–185 threads the bilayer; that stretch reads FFFGVSAISLAINMLFISKIL. The Extracellular portion of the chain corresponds to 186 to 236; that stretch reads FNGSGFDVDEYVRRLYKFAYSDCVEVAPVSCSPDPPDPSELYMTKSSRVLH. Residues 237–257 form a helical membrane-spanning segment; sequence LGLLYLCSLMVLVVYSILYGL. Residues 258-264 lie on the Cytoplasmic side of the membrane; sequence TSKEARW. The helical transmembrane segment at 265–285 threads the bilayer; the sequence is LGALTSVAVVILDWNLGLCSF. Over 286 to 294 the chain is Extracellular; sequence RFELLKSRM. Residues 295 to 315 traverse the membrane as a helical segment; it reads IALFVAGTSRVFLICFGVHYW. The Cytoplasmic segment spans residues 316–320; that stretch reads YLGHC. A helical membrane pass occupies residues 321–341; sequence ISYAFVASVLLAAAVSCWLSI. Residues 342-626 lie on the Extracellular side of the membrane; that stretch reads SNPSVARIDA…LMFHQVAGSP (285 aa). The tract at residues 366–403 is disordered; that stretch reads KGQTSSSNSSDGCGSSVKRSSGSVEAGPHGNATDSMYR. The segment covering 370–381 has biased composition (low complexity); that stretch reads SSSNSSDGCGSS. A helical transmembrane segment spans residues 627 to 647; it reads IRAFVVFTLIFIIETVTVAVH. The Cytoplasmic portion of the chain corresponds to 648 to 663; the sequence is RPKPIKVINATHEQFE. Residues 664-684 form a helical membrane-spanning segment; sequence FGFSILLLSPVVCSIMAFIWS. The Extracellular segment spans residues 685-697; that stretch reads LCAEEMTMTSKPR. The helical transmembrane segment at 698 to 718 threads the bilayer; sequence KYGFIAWLLSTCVGLLLSFLS. Topologically, residues 719–722 are cytoplasmic; sequence KSSV. The chain crosses the membrane as a helical span at residues 723–743; sequence ILGLSLTVPLMVACLSFAIPI. The Extracellular portion of the chain corresponds to 744–773; it reads WMRNGYRFWIPGGELDSRENIRQAPGKKER. A helical transmembrane segment spans residues 774 to 794; that stretch reads ALFAISITVFTASVIGLGAIV. Topologically, residues 795-825 are cytoplasmic; the sequence is SAKPLDALGYKGWDADKKSFYSPYATSMYLG. Residues 826–846 form a helical membrane-spanning segment; that stretch reads WALSSTIAVLATGVIPIVAWF. At 847 to 856 the chain is on the extracellular side; sequence ATYRFSPSSA. The helical transmembrane segment at 857-877 threads the bilayer; that stretch reads ICVGLFATVLVSFCGVSYWGV. Over 878–890 the chain is Cytoplasmic; sequence VNSRQDGVPLKAD. Residues 891–911 form a helical membrane-spanning segment; sequence FLAALLPLLCIPAVFSLFTGM. The Extracellular segment spans residues 912-924; that stretch reads YKWKDDDWKISRG. The chain crosses the membrane as a helical span at residues 925 to 945; that stretch reads VYLFVGMGVLLLLGAISAVIV. The Cytoplasmic segment spans residues 946-949; sequence TIRP. A helical membrane pass occupies residues 950–970; sequence WTVGVACLLVILFLVFAIGVI. Topologically, residues 971–984 are extracellular; the sequence is HYWTSNNFYLTRTQ. Residues 985–1005 traverse the membrane as a helical segment; the sequence is MLLVCSLAFLLALAAFLMGLF. The Cytoplasmic segment spans residues 1006–1019; sequence QEKPFVGASIGYFS. Residues 1020–1040 form a helical membrane-spanning segment; the sequence is FLFLLTGRALTVLLSPPIVVY. The Extracellular segment spans residues 1041–1063; sequence SPRVLPVYVYDAHADSAKNVSYA. The chain crosses the membrane as a helical span at residues 1064–1084; that stretch reads FLILYGIALATEVWGVIASLI. Topologically, residues 1085–2162 are cytoplasmic; it reads LNPPFIGAAI…TKAPIKLEAV (1078 aa). A phosphoserine mark is found at Ser-1372 and Ser-1377. Positions 1418–1611 constitute a Calpain catalytic 1 domain; sequence TGRHCGEIDL…ICSAEYGLFD (194 aa). Ser-1668 is modified (phosphoserine). One can recognise a Calpain catalytic 2 domain in the interval 1706–2008; that stretch reads NFTDQEFPPD…FRSIYVCRVY (303 aa). Catalysis depends on residues Cys-1772, His-1930, and Asn-1950.

The protein belongs to the peptidase C2 family. Post-translationally, autocatalytic proteolytic cleavage leading to the production of mainly cytoplasmic localized subproducts of about 85 and 120 kDa. As to expression, ubiquitously expressed with higher levels in embryos, vasculatures, leaf primordia, leaf margins, and shoot apical meristem (SAM).

Its subcellular location is the endoplasmic reticulum membrane. The protein localises to the cytoplasm. The protein resides in the cell membrane. It is found in the endosome membrane. In terms of biological role, essential protease involved in epiderm development. Required for aleurone cell development in the endosperm probably by maintaining and restricting the aleurone and embryonic epidermal L1 cell-layer fates as well as meristems organization. Involved in the maintenance of adaxial/abaxial axis information in developing leaves, probably by regulating cell proliferation and expansion. Does not need calcium ions to be active. The protein is Calpain-type cysteine protease ADL1 (ADL1) of Oryza sativa subsp. japonica (Rice).